Here is a 194-residue protein sequence, read N- to C-terminus: Dephospho-CoA kinase (194 aa).

Residues 4–194 enclose the DPCK domain; the sequence is ALGLTGSIGM…HLVSKLTEGT (191 aa). Residue 12-17 coordinates ATP; the sequence is GMGKST.

The protein belongs to the CoaE family.

It localises to the cytoplasm. It catalyses the reaction 3'-dephospho-CoA + ATP = ADP + CoA + H(+). Its pathway is cofactor biosynthesis; coenzyme A biosynthesis; CoA from (R)-pantothenate: step 5/5. Functionally, catalyzes the phosphorylation of the 3'-hydroxyl group of dephosphocoenzyme A to form coenzyme A. The sequence is that of Dephospho-CoA kinase from Jannaschia sp. (strain CCS1).